The chain runs to 117 residues: uncharacterized protein (117 aa).

Residues 1–21 (MEIAIIALFIVSIALIAFSYS) form a helical membrane-spanning segment. A coiled-coil region spans residues 38–67 (LSAMQEIYKLKKKMTVLEEELLETNLVIRK).

Its subcellular location is the cell membrane. This is an uncharacterized protein from Bacillus subtilis (strain 168).